A 421-amino-acid polypeptide reads, in one-letter code: 3-isopropylmalate dehydratase large subunit (421 aa).

Residues Cys-301, Cys-361, and Cys-364 each coordinate [4Fe-4S] cluster.

Belongs to the aconitase/IPM isomerase family. LeuC type 2 subfamily. Heterodimer of LeuC and LeuD. Requires [4Fe-4S] cluster as cofactor.

It catalyses the reaction (2R,3S)-3-isopropylmalate = (2S)-2-isopropylmalate. It participates in amino-acid biosynthesis; L-leucine biosynthesis; L-leucine from 3-methyl-2-oxobutanoate: step 2/4. Its function is as follows. Catalyzes the isomerization between 2-isopropylmalate and 3-isopropylmalate, via the formation of 2-isopropylmaleate. The sequence is that of 3-isopropylmalate dehydratase large subunit from Desulfitobacterium hafniense (strain Y51).